The sequence spans 42 residues: Ostricacin-4 (42 aa).

3 disulfide bridges follow: cysteine 8/cysteine 36, cysteine 15/cysteine 30, and cysteine 20/cysteine 37.

It localises to the secreted. In terms of biological role, has antibacterial activity against the Gram-positive bacterium S.aureus 1056 MRSA (MIC=11.48 ug/ml) and the Gram-negative bacterium E.coli O157:H7 (MIC=12.03 ug/ml). Does not have antifungal activity against the yeast C.albicans 3153A. The polypeptide is Ostricacin-4 (Struthio camelus (Common ostrich)).